A 194-amino-acid polypeptide reads, in one-letter code: ATP-dependent Clp protease proteolytic subunit 3 (194 aa).

The Nucleophile role is filled by S96. Residue H121 is part of the active site.

Belongs to the peptidase S14 family. As to quaternary structure, fourteen ClpP subunits assemble into 2 heptameric rings which stack back to back to give a disk-like structure with a central cavity, resembling the structure of eukaryotic proteasomes.

It is found in the cytoplasm. It catalyses the reaction Hydrolysis of proteins to small peptides in the presence of ATP and magnesium. alpha-casein is the usual test substrate. In the absence of ATP, only oligopeptides shorter than five residues are hydrolyzed (such as succinyl-Leu-Tyr-|-NHMec, and Leu-Tyr-Leu-|-Tyr-Trp, in which cleavage of the -Tyr-|-Leu- and -Tyr-|-Trp bonds also occurs).. In terms of biological role, cleaves peptides in various proteins in a process that requires ATP hydrolysis. Has a chymotrypsin-like activity. Plays a major role in the degradation of misfolded proteins. This is ATP-dependent Clp protease proteolytic subunit 3 from Prochlorococcus marinus (strain NATL2A).